The chain runs to 63 residues: Cecropin (63 aa).

An N-terminal signal peptide occupies residues 1–23; it reads MNFYKIFVFIALILALSVSQSEA. R62 carries the post-translational modification Arginine amide.

As to quaternary structure, monomer. Hemolymph.

Its subcellular location is the secreted. Cecropins have lytic and antibacterial activity against several Gram-negative bacteria. The protein is Cecropin of Glossina morsitans morsitans (Savannah tsetse fly).